The chain runs to 693 residues: Polyribonucleotide nucleotidyltransferase (693 aa).

Asp-489 and Asp-495 together coordinate Mg(2+). A KH domain is found at 556-615 (PQIHVMNINPAKIKDVVGRGGATVKGIVEKTGAQIDTSDSGEVKVFAKDKKSMDMAVAMI). Positions 625 to 693 (GQVYKGKIVK…GRVKLSLVAR (69 aa)) constitute an S1 motif domain.

Belongs to the polyribonucleotide nucleotidyltransferase family. In terms of assembly, component of the RNA degradosome, which is a multiprotein complex involved in RNA processing and mRNA degradation. Mg(2+) serves as cofactor.

Its subcellular location is the cytoplasm. It carries out the reaction RNA(n+1) + phosphate = RNA(n) + a ribonucleoside 5'-diphosphate. Involved in mRNA degradation. Catalyzes the phosphorolysis of single-stranded polyribonucleotides processively in the 3'- to 5'-direction. The protein is Polyribonucleotide nucleotidyltransferase of Francisella tularensis subsp. tularensis (strain WY96-3418).